A 263-amino-acid chain; its full sequence is Phosphatidylglycerol--prolipoprotein diacylglyceryl transferase (263 aa).

Helical transmembrane passes span 15-35 (ISIHWYAICIVSGLLLAVYLA), 52-72 (FILLAFPIAIVGARLYYVIFQ), 83-103 (IFAIWNGGIAIYGGLIAGAAV), and 112-132 (AIAVLDFLDIAAPGVMIAQSI). R134 is an a 1,2-diacyl-sn-glycero-3-phospho-(1'-sn-glycerol) binding site. The next 3 helical transmembrane spans lie at 170-190 (VPTFLYESLWNLVGFSIILGL), 200-220 (GDVTSFYLIWYGLGRFVIEGM), and 227-247 (FVGLRVSQWVSISIIILGAVL).

Belongs to the Lgt family.

It localises to the cell membrane. The catalysed reaction is L-cysteinyl-[prolipoprotein] + a 1,2-diacyl-sn-glycero-3-phospho-(1'-sn-glycerol) = an S-1,2-diacyl-sn-glyceryl-L-cysteinyl-[prolipoprotein] + sn-glycerol 1-phosphate + H(+). It participates in protein modification; lipoprotein biosynthesis (diacylglyceryl transfer). Catalyzes the transfer of the diacylglyceryl group from phosphatidylglycerol to the sulfhydryl group of the N-terminal cysteine of a prolipoprotein, the first step in the formation of mature lipoproteins. The protein is Phosphatidylglycerol--prolipoprotein diacylglyceryl transferase of Streptococcus thermophilus (strain ATCC BAA-491 / LMD-9).